We begin with the raw amino-acid sequence, 236 residues long: UPF0257 lipoprotein YnfC (236 aa).

An N-terminal signal peptide occupies residues 1 to 16 (MKYKLLPCLLAIFLTG). C17 is lipidated: N-palmitoyl cysteine. A lipid anchor (S-diacylglycerol cysteine) is attached at C17.

This sequence belongs to the UPF0257 family.

It localises to the cell membrane. The polypeptide is UPF0257 lipoprotein YnfC (Escherichia coli O7:K1 (strain IAI39 / ExPEC)).